The following is a 303-amino-acid chain: GPN-loop GTPase 2 (303 aa).

Gly29–Thr34 contributes to the GTP binding site. The Gly-Pro-Asn (GPN)-loop; involved in dimer interface signature appears at Gly85–Asn87. Residue Ser187–Asp190 coordinates GTP.

The protein belongs to the GPN-loop GTPase family. In terms of assembly, heterodimers with gpn1 or gpn3. Binds to RNA polymerase II (RNAPII).

Its function is as follows. Small GTPase required for proper localization of RNA polymerase II and III (RNAPII and RNAPIII). May act at an RNAP assembly step prior to nuclear import. The polypeptide is GPN-loop GTPase 2 (Xenopus tropicalis (Western clawed frog)).